A 236-amino-acid chain; its full sequence is V-set and transmembrane domain-containing protein 1 (236 aa).

The first 16 residues, 1-16 (MTAEFLSLLCLGLCLG), serve as a signal peptide directing secretion. Topologically, residues 17 to 135 (YEDEKKNEKP…APSMKTDTRT (119 aa)) are extracellular. The Ig-like V-type domain maps to 27 to 114 (PKPSLHAWPS…EWSESSEHLQ (88 aa)). Residues Asn44 and Asn55 are each glycosylated (N-linked (GlcNAc...) asparagine). A disulfide bridge links Cys49 with Cys96. A helical transmembrane segment spans residues 136 to 156 (IFVAIFSCISILLLFLSVFII). The Cytoplasmic segment spans residues 157 to 236 (YRCSQHSSSS…GSHEYAALKV (80 aa)). The interval 166 to 200 (SEESTKRTSHSKLPEQEAAEADLSNMERVSLSTAD) is disordered. 2 consecutive short sequence motifs (ITIM motif) follow at residues 204–209 (VTYAEL) and 229–234 (HEYAAL). Residues 215 to 236 (SEAASDTTQEPPGSHEYAALKV) are disordered.

In terms of processing, isoform 2 is N-glycosylated. Expressed on myeloid (neutrophils, eosinophils and monocytes) but not on lymphoid cells.

It localises to the membrane. The protein localises to the secreted. Functionally, behaves as a cytokine, promoting IL17A secretion by CD4+ T-cells, and differentiation and activation of IL17 producing helper T-cells (TH17). Inhibitory immune receptor involved in the regulation of phagocytes. The sequence is that of V-set and transmembrane domain-containing protein 1 (VSTM1) from Homo sapiens (Human).